The following is a 416-amino-acid chain: Glutamyl-tRNA reductase (416 aa).

Residues 49-52 (TCNR), Ser-105, 110-112 (EPQ), and Gln-116 contribute to the substrate site. The active-site Nucleophile is the Cys-50. Residue 185-190 (GAGETI) coordinates NADP(+).

Belongs to the glutamyl-tRNA reductase family. As to quaternary structure, homodimer.

The catalysed reaction is (S)-4-amino-5-oxopentanoate + tRNA(Glu) + NADP(+) = L-glutamyl-tRNA(Glu) + NADPH + H(+). It participates in porphyrin-containing compound metabolism; protoporphyrin-IX biosynthesis; 5-aminolevulinate from L-glutamyl-tRNA(Glu): step 1/2. In terms of biological role, catalyzes the NADPH-dependent reduction of glutamyl-tRNA(Glu) to glutamate 1-semialdehyde (GSA). This Shewanella loihica (strain ATCC BAA-1088 / PV-4) protein is Glutamyl-tRNA reductase.